The chain runs to 417 residues: GTP-binding protein YPT11 (417 aa).

Positions 1–34 (MSQRKRYSLNVVTSPSIPSPTPSAPIRTNESNWE) are disordered. GTP is bound by residues 97-104 (GDANVGKT), 228-232 (DTAGQ), and 292-295 (NKID). Residues C415 and C416 are each lipidated (S-geranylgeranyl cysteine).

It belongs to the small GTPase superfamily. Rab family. In terms of assembly, interacts with MYO2 (via C-terminal tail domain). Interacts with YIF1, YIP3, YIP4 and YIP5.

The protein localises to the endoplasmic reticulum membrane. The protein resides in the bud tip. It is found in the bud neck. Its function is as follows. Involved in the positive control of both endoplasmic reticulum (ER) and mitochondrion inheritance during cell divison. Required for the MYO2-dependent retention of newly inherited mitochondria at the bud tip in developing daughter cells. The sequence is that of GTP-binding protein YPT11 (YPT11) from Saccharomyces cerevisiae (strain AWRI1631) (Baker's yeast).